The sequence spans 904 residues: Protein translocase subunit SecA (904 aa).

ATP is bound by residues Gln-87, 105 to 109, and Asp-507; that span reads GEGKT. Residues 865–887 form a disordered region; the sequence is GEGAEAAGQQPADAGPKIGRNDP. The segment covering 868 to 880 has biased composition (low complexity); sequence AEAAGQQPADAGP. Zn(2+) is bound by residues Cys-888, Cys-890, Cys-899, and His-900.

This sequence belongs to the SecA family. As to quaternary structure, monomer and homodimer. Part of the essential Sec protein translocation apparatus which comprises SecA, SecYEG and auxiliary proteins SecDF-YajC and YidC. It depends on Zn(2+) as a cofactor.

Its subcellular location is the cell inner membrane. It localises to the cytoplasm. The catalysed reaction is ATP + H2O + cellular proteinSide 1 = ADP + phosphate + cellular proteinSide 2.. Its function is as follows. Part of the Sec protein translocase complex. Interacts with the SecYEG preprotein conducting channel. Has a central role in coupling the hydrolysis of ATP to the transfer of proteins into and across the cell membrane, serving both as a receptor for the preprotein-SecB complex and as an ATP-driven molecular motor driving the stepwise translocation of polypeptide chains across the membrane. The sequence is that of Protein translocase subunit SecA from Dechloromonas aromatica (strain RCB).